A 196-amino-acid chain; its full sequence is MNTGNRIGIFGGSFDPIHTGHVLVSVYTLEILDLDRLIVVPVFNPPHKKTVAPFEKRFEWLKKVFEGMEKVEVSDYEKGRGGVSYSIFTIEYFSEIYKTKPFFIVGEDALSYFEKWYRYRDILEKSTLVVYPRYCGKPYHEHARRVLGDLSEIVFLDMPIVQISSTEIRERARIGKTLKGFVPEEIREEVEVFYGA.

The protein belongs to the NadD family.

It catalyses the reaction nicotinate beta-D-ribonucleotide + ATP + H(+) = deamido-NAD(+) + diphosphate. The protein operates within cofactor biosynthesis; NAD(+) biosynthesis; deamido-NAD(+) from nicotinate D-ribonucleotide: step 1/1. Its function is as follows. Catalyzes the reversible adenylation of nicotinate mononucleotide (NaMN) to nicotinic acid adenine dinucleotide (NaAD). The sequence is that of Probable nicotinate-nucleotide adenylyltransferase from Thermotoga petrophila (strain ATCC BAA-488 / DSM 13995 / JCM 10881 / RKU-1).